The sequence spans 44 residues: U17-ctenitoxin-Co1a (44 aa).

4 disulfide bridges follow: cysteine 3-cysteine 20, cysteine 10-cysteine 26, cysteine 19-cysteine 40, and cysteine 28-cysteine 38.

As to expression, expressed by the venom gland.

The protein resides in the secreted. Its function is as follows. Omega-agatoxins are antagonists of voltage-sensitive calcium channels (Cav). Toxic to mice by intracerebroventricular injection. This chain is U17-ctenitoxin-Co1a, found in Ctenus ornatus (Brazilian spider).